We begin with the raw amino-acid sequence, 234 residues long: MNLRAIAVTFATFAGANAAVIDHDQVIPFAQPMPNTTLQSVAIQFKPQIYINNGCHPYPAVDADGNTSGGLKPTGSQSAGCKGSGYGSQIYGRAVEYEGVYAFMYSWYMPKDETLDGQGHRHDWENCVVWLDSLDRPSIVALSASYHSTYNYYYPPSSSYLDGNSAKIQYSTSWIVLDHSLSATSTAGEIQDLIMWDQLTDAARTALEDTDFGSANVPFKEDNFIAKLAKAYYV.

The signal sequence occupies residues 1–18 (MNLRAIAVTFATFAGANA). Residues asparagine 35 and asparagine 66 are each glycosylated (N-linked (GlcNAc...) asparagine). The Hepta-peptide GHRHDWE motif motif lies at 119-125 (GHRHDWE).

This sequence belongs to the Necrosis inducing protein (NPP1) family.

The protein localises to the secreted. Secreted effector that contributes strongly to virulence during infection by P.capsici. The polypeptide is NLP effector protein Pc576423 (Phytophthora capsici).